A 376-amino-acid polypeptide reads, in one-letter code: Histidinol-phosphate aminotransferase 1 (376 aa).

Lys-235 is modified (N6-(pyridoxal phosphate)lysine).

It belongs to the class-II pyridoxal-phosphate-dependent aminotransferase family. Histidinol-phosphate aminotransferase subfamily. As to quaternary structure, homodimer. Pyridoxal 5'-phosphate serves as cofactor.

It carries out the reaction L-histidinol phosphate + 2-oxoglutarate = 3-(imidazol-4-yl)-2-oxopropyl phosphate + L-glutamate. Its pathway is amino-acid biosynthesis; L-histidine biosynthesis; L-histidine from 5-phospho-alpha-D-ribose 1-diphosphate: step 7/9. This is Histidinol-phosphate aminotransferase 1 from Cupriavidus pinatubonensis (strain JMP 134 / LMG 1197) (Cupriavidus necator (strain JMP 134)).